The chain runs to 584 residues: Mitochondrial sodium/calcium exchanger protein (584 aa).

Residues 1–26 (MAGRRLNLRWALSVLCVLLMAETVSG) form the signal peptide. Over 27–95 (TRGSSTGAHI…GIFCHFPPSL (69 aa)) the chain is Extracellular. N-linked (GlcNAc...) asparagine glycosylation occurs at Asn-60. Residues 96-116 (LPLAVTLYVSWLLYLFLILGV) traverse the membrane as a helical segment. Residues 117–140 (TAAKFFCPNLSAISTTLKLSHNVA) are Cytoplasmic-facing. Residues 141 to 161 (GVTFLAFGNGAPDIFSALVAF) form a helical membrane-spanning segment. Over 162–168 (SDPHTAG) the chain is Extracellular. A helical membrane pass occupies residues 169 to 189 (LALGALFGAGVLVTTVVAGGI). The Cytoplasmic segment spans residues 190–200 (TILHPFMAASR). The helical transmembrane segment at 201 to 221 (PFFRDIVFYMVAVFLTFLMLF) threads the bilayer. At 222–226 (RGRVT) the chain is on the extracellular side. A helical transmembrane segment spans residues 227-247 (LAWALGYLGLYVFYVVTVILC). Over 248-325 (TWIYQRQRRG…KWRRKSAYWK (78 aa)) the chain is Cytoplasmic. Ser-258 is subject to Phosphoserine; by PKA. The chain crosses the membrane as a helical span at residues 326-346 (ALKVFKLPVEFLLLLTVPVVD). Topologically, residues 347–360 (PDKDDQNWKRPLNC) are extracellular. Residues 361–381 (LHLVISPLVVVLTLQSGTYGV) form a helical membrane-spanning segment. Over 382–383 (YE) the chain is Cytoplasmic. Residues 384 to 404 (IGGLVPVWVVVVIAGTALASV) form a helical membrane-spanning segment. At 405 to 416 (TFFATSDSQPPR) the chain is on the extracellular side. The chain crosses the membrane as a helical span at residues 417–437 (LHWLFAFLGFLTSALWINAAA). Residues 438–445 (TEVVNILR) lie on the Cytoplasmic side of the membrane. The chain crosses the membrane as a helical span at residues 446–466 (SLGVVFRLSNTVLGLTLLAWG). Topologically, residues 467–487 (NSIGDAFSDFTLARQGYPRMA) are extracellular. The helical transmembrane segment at 488 to 508 (FSACFGGIIFNILVGVGLGCL) threads the bilayer. Over 509–524 (LQISRSHTEVKLEPDG) the chain is Cytoplasmic. Residues 525 to 545 (LLVWVLAGALGLSLVFSLVSV) traverse the membrane as a helical segment. The Extracellular segment spans residues 546-558 (PLQCFQLSRVYGF). Residues 559 to 579 (CLLLFYLNFLVVALLTEFGVI) form a helical membrane-spanning segment. The Cytoplasmic segment spans residues 580 to 584 (HLKSM).

It belongs to the Ca(2+):cation antiporter (CaCA) (TC 2.A.19) family. SLC24A subfamily. Post-translationally, phosphorylation at Ser-258 by PKA prevents calcium overload. In terms of tissue distribution, present in pancreatic beta-cells (at protein level).

Its subcellular location is the mitochondrion inner membrane. It carries out the reaction Ca(2+)(in) + 3 Na(+)(out) = Ca(2+)(out) + 3 Na(+)(in). The catalysed reaction is 3 Li(+)(out) + Ca(2+)(in) = 3 Li(+)(in) + Ca(2+)(out). Inhibited by the sodium/calcium exchanger inhibitor CGP-37157. Strongly inhibited by zinc. In terms of biological role, mitochondrial sodium/calcium antiporter that mediates sodium-dependent calcium efflux from mitochondrion, by mediating the exchange of 3 sodium ions per 1 calcium ion. Plays a central role in mitochondrial calcium homeostasis by mediating mitochondrial calcium extrusion: calcium efflux is essential for mitochondrial function and cell survival, notably in cardiomyocytes. Regulates rates of glucose-dependent insulin secretion in pancreatic beta-cells during the first phase of insulin secretion: acts by mediating efflux of calcium from mitochondrion, thereby affecting cytoplasmic calcium responses. Required for store-operated Ca(2+) entry (SOCE) and Ca(2+) release-activated Ca(2+) (CRAC) channel regulation: sodium transport by SLC8B1 leads to promote calcium-shuttling that modulates mitochondrial redox status, thereby regulating SOCE activity. Involved in B-lymphocyte chemotaxis. Able to transport Ca(2+) in exchange of either Li(+) or Na(+), explaining how Li(+) catalyzes Ca(2+) exchange. In contrast to other members of the family its function is independent of K(+). This chain is Mitochondrial sodium/calcium exchanger protein, found in Homo sapiens (Human).